The chain runs to 356 residues: Nuclear hormone receptor family member nhr-169 (356 aa).

Positions 16–90 form a DNA-binding region, nuclear receptor; it reads DPICSVCNFS…AGMKRSLVKE (75 aa). 2 consecutive NR C4-type zinc fingers follow at residues 19-40 and 56-72; these read CSVC…CSAC and CKKD…CRAC. The region spanning 144–356 is the NR LBD domain; the sequence is DVSKILKTTP…KLYLHMGLPF (213 aa).

It belongs to the nuclear hormone receptor family.

The protein resides in the nucleus. Its function is as follows. Orphan nuclear receptor. The polypeptide is Nuclear hormone receptor family member nhr-169 (nhr-169) (Caenorhabditis elegans).